The sequence spans 109 residues: A-type ATP synthase subunit F (109 aa).

The protein belongs to the V-ATPase F subunit family. Has multiple subunits with at least A(3), B(3), C, D, E, F, H, I and proteolipid K(x).

It localises to the cell membrane. Functionally, component of the A-type ATP synthase that produces ATP from ADP in the presence of a proton gradient across the membrane. In Halorubrum lacusprofundi (strain ATCC 49239 / DSM 5036 / JCM 8891 / ACAM 34), this protein is A-type ATP synthase subunit F.